The primary structure comprises 366 residues: Ferrochelatase (366 aa).

Residues H210 and E293 each contribute to the Fe cation site.

It belongs to the ferrochelatase family.

It is found in the cytoplasm. The catalysed reaction is heme b + 2 H(+) = protoporphyrin IX + Fe(2+). Its pathway is porphyrin-containing compound metabolism; protoheme biosynthesis; protoheme from protoporphyrin-IX: step 1/1. Its function is as follows. Catalyzes the ferrous insertion into protoporphyrin IX. The polypeptide is Ferrochelatase (Leptospira borgpetersenii serovar Hardjo-bovis (strain JB197)).